Reading from the N-terminus, the 1046-residue chain is Protein HBT1 (1046 aa).

Disordered stretches follow at residues 1–455 (MNMN…AAEK), 469–894 (DYQQ…LGGA), and 908–1046 (PSLI…RSEI). Ser-41 is subject to Phosphoserine. A compositionally biased stretch (basic and acidic residues) spans 81 to 96 (KDSETPHEDTEADANR). 3 stretches are compositionally biased toward polar residues: residues 98-149 (ANVT…SPPT), 175-191 (IATT…TSPV), and 228-301 (ANTG…NTDS). Ser-303 is modified (phosphoserine). The span at 327-341 (VYTSTGPKSNVSSGM) shows a compositional bias: polar residues. Ser-363 is modified (phosphoserine). Composition is skewed to polar residues over residues 389–408 (QTGL…QQTM) and 420–429 (GFVSQQPSYH). A compositionally biased stretch (basic and acidic residues) spans 430-455 (DSNKNIQHPEKNKVDNKNISERAAEK). The span at 488–498 (YSSSAGKNKNL) shows a compositional bias: polar residues. Phosphoserine is present on Ser-491. Basic and acidic residues predominate over residues 529-538 (GHMKYNDNGR). Polar residues predominate over residues 548–559 (QAGSQNTNNNID). Residue Ser-561 is modified to Phosphoserine. Residues 570-582 (GLSNDATTRNNVV) show a composition bias toward polar residues. Residues 586–597 (MKDEDMNEDSTK) are compositionally biased toward basic and acidic residues. Residues 605-619 (YLDDVEDYHENDIDD) show a composition bias toward acidic residues. Over residues 621–630 (SNAKKNDLYS) the composition is skewed to basic and acidic residues. Ser-671 carries the phosphoserine modification. Positions 742 to 756 (FTNNPETGTTGNVDT) are enriched in polar residues. A compositionally biased stretch (basic and acidic residues) spans 773–782 (DDSKNTDTHL). Composition is skewed to polar residues over residues 792 to 802 (NSRSGDTTYSK) and 837 to 855 (SSEQ…NQEY). The residue at position 855 (Tyr-855) is a Phosphotyrosine. Ser-857 carries the phosphoserine modification. Residues 868–890 (KVLEEDAPGYKREVDLKNKRRTD) are compositionally biased toward basic and acidic residues. Over residues 922 to 951 (DTNTSSSQKPSEGTYPETTSYSIHNETTSQ) the composition is skewed to polar residues. Over residues 952 to 963 (GRKVSVGSMGSG) the composition is skewed to low complexity. The segment covering 964-976 (KSKHHHNHHRHSR) has biased composition (basic residues). Phosphoserine is present on Ser-1005. A compositionally biased stretch (acidic residues) spans 1006–1019 (DEGEQDYHDDEQGE). Ser-1034 carries the phosphoserine modification.

In terms of assembly, conjugated with HUB1. HUB1 has not the classical C-terminal Gly residue, so it is still unknown how conjugation may occur.

It localises to the cytoplasm. Functionally, polarity-determining protein which forms a conjugate with the ubiquitin-like modifier HUB1. Involved in bud site selection and cellular morphogenesis during conjugation. Required for survival during stationary phase. The polypeptide is Protein HBT1 (HBT1) (Saccharomyces cerevisiae (strain ATCC 204508 / S288c) (Baker's yeast)).